A 1596-amino-acid polypeptide reads, in one-letter code: Protein son of sevenless (1596 aa).

The DH domain occupies 248-434 (TYEETVKELI…HPLHCDLEKV (187 aa)). A PH domain is found at 480–588 (EFIREDSLSK…WMADLLMVIT (109 aa)). The N-terminal Ras-GEF domain maps to 637-792 (GVPMIKGATL…SVLKIVQRKN (156 aa)). In terms of domain architecture, Ras-GEF spans 829 to 1066 (HPLELARQLT…YNESLRIEPR (238 aa)). 5 disordered regions span residues 1073 to 1105 (KFPR…LSNS), 1175 to 1212 (RNTS…AHVW), 1235 to 1291 (EHLP…TAST), 1340 to 1392 (RAVP…NHST), and 1465 to 1596 (PLPI…TNEE). Over residues 1096-1105 (TNSSSKLSNS) the composition is skewed to low complexity. 2 stretches are compositionally biased toward polar residues: residues 1175 to 1195 (RNTS…NNGE) and 1280 to 1291 (MQNSPTHSTAST). Positions 1352–1366 (ERTESCADMAQKRQA) are enriched in basic and acidic residues. The segment covering 1469–1489 (SPAASSSTTTSPLTPAMSPMS) has biased composition (low complexity). The span at 1526 to 1542 (HHQHHATHLPHHPHQHH) shows a compositional bias: basic residues. 2 positions are modified to phosphoserine: serine 1550 and serine 1551.

As to quaternary structure, may form a complex with sevenless and DRK.

In terms of biological role, promotes the exchange of Ras-bound GDP by GTP. Functions in signaling pathways initiated by the sevenless and epidermal growth factor receptor tyrosine kinases; implies a role for the ras pathway in neuronal development. In Drosophila melanogaster (Fruit fly), this protein is Protein son of sevenless (Sos).